Reading from the N-terminus, the 1032-residue chain is Caspase recruitment domain-containing protein 10 (1032 aa).

Disordered regions lie at residues Met1–Glu23, Arg253–Asn276, and Glu481–Ile553. The residue at position 18 (Ser18) is a Phosphoserine. The CARD domain maps to Glu23–Glu115. The stretch at Thr138–Gly456 forms a coiled coil. Composition is skewed to basic and acidic residues over residues Ala261 to Asn276 and His504 to Asn517.

In terms of assembly, CARD10 and BCL10 bind to each other by CARD-CARD interaction. They both participate in a complex with MALT1, where MALT1 binds to BCL10. Interacts with TMEM43; this interaction is essential for EGFR-mediated NF-kappa-B activation. Detected in adult heart, kidney and liver; lower levels in intestine, placenta, muscle and lung. Also found in fetal lung, liver and kidney.

The protein localises to the cytoplasm. In terms of biological role, scaffold protein that plays an important role in mediating the activation of NF-kappa-B via BCL10 or EGFR. This chain is Caspase recruitment domain-containing protein 10 (CARD10), found in Homo sapiens (Human).